An 810-amino-acid polypeptide reads, in one-letter code: MVTNKMTAAFRNPSGKQVATDKVAEKLSSTLSWVKNTVSHTVSQMASQVASPSTSLHTTSSSTTLSTPALSPSSPSQLSPDDLELLAKLEEQNRLLETDSKSLRSVNGSRRNSGSSLVSSSSASSNLSHLEEDSWILWGRIVNEWEDVRKKKEKQVKELVHKGIPHHFRAIVWQLLCSAQSMPIKDQYSELLKMTSPCEKLIRRDIARTYPEHNFFKEKDSLGQEVLFNVMKAYSLVDREVGYCQGSAFIVGLLLMQMPEEEAFCVFVKLMQDYRLRELFKPSMAELGLCMYQFECMIQEHLPELFVHFQSQSFHTSMYASSWFLTIFLTTFPLPIATRIFDIFMSEGLEIVFRVGLALLQMNQAELMQLDMEGMLQHFQKVIPHQFDGVPDKLIQAAYQVKYNSKKMKKLEKEYTTIKTKEMEEQVEIKRLRTENRLLKQRIETLEKHKCSSNYNEDFVLQLEKELVQARLSEAESQCALKEMQDKVLDIEKRNNSLPDENNIARLQEELIAVKLREAEAIMGLKELRQQVKDLEEHWQRHLARTTGRWKDPPKKNAMNELQDELMTIRLREAETQAEIREIKQRMMEMETQNQINSNHLRRAEQEVISLQEKVQYLSAQNKGLLTQLSEAKRKQAEIECKNKEEVMAVRLREADSIAAVAELRQHIAELEIQKEEGKLQGQLNKSDSNQYIGELKDQIAELNHELRCLKGQRGFSGQPPFDGIHIVNHLIGDDESFHSSDEDFIDNSLQETGVGFPLHGKSGSMSLDPAVADGSESETEDSVLETRESNQVVQKERPPRRRESYSTTV.

The segment at 1 to 483 (MVTNKMTAAF…EAESQCALKE (483 aa)) is interaction with alpha-tubulin, gamma-tubulin, BIRC5 and FBXO5. Disordered stretches follow at residues 49 to 80 (VASPSTSLHTTSSSTTLSTPALSPSSPSQLSP) and 98 to 123 (TDSKSLRSVNGSRRNSGSSLVSSSSA). The segment covering 51–80 (SPSTSLHTTSSSTTLSTPALSPSSPSQLSP) has biased composition (low complexity). A phosphoserine mark is found at S102 and S113. Residues 103 to 123 (LRSVNGSRRNSGSSLVSSSSA) show a composition bias toward low complexity. The segment at 128-693 (SHLEEDSWIL…LNKSDSNQYI (566 aa)) is dimerization. Residues 163–348 (GIPHHFRAIV…RIFDIFMSEG (186 aa)) form the Rab-GAP TBC domain. The interval 377–810 (QHFQKVIPHQ…RRRESYSTTV (434 aa)) is targeting to the centrosomes. Positions 406–716 (KKMKKLEKEY…LRCLKGQRGF (311 aa)) form a coiled coil. The tract at residues 487-810 (KVLDIEKRNN…RRRESYSTTV (324 aa)) is interaction with AURKB and INCENP. Phosphoserine is present on residues S497, S689, S776, and S778. Positions 756–810 (GFPLHGKSGSMSLDPAVADGSESETEDSVLETRESNQVVQKERPPRRRESYSTTV) are disordered. Positions 785 to 810 (LETRESNQVVQKERPPRRRESYSTTV) are enriched in basic and acidic residues.

In terms of assembly, dimeric and monomeric. Interacts with alpha- and gamma-tubulin. Interacts with FBXO5. Interacts with the chromosome passenger complex (CPC) which is at least composed of AURKB/aurora-B, BIRC5/survivin, CDCA8/borealin and INCENP. Post-translationally, probably phosphorylated by PLK1; may be required for degradation during mitosis. In terms of processing, ubiquitinated. Degradation during prophase is ubiquitin-dependent. In terms of tissue distribution, expressed in various cell lines (at protein level). Expressed in a wide range of tissues including brain and adrenal.

It is found in the nucleus. The protein resides in the cytoplasm. It localises to the cytoskeleton. The protein localises to the microtubule organizing center. Its subcellular location is the centrosome. It is found in the spindle. In terms of biological role, functions as a regulator of cell cycle progression by stabilizing the FBXO5 protein and promoting cyclin-A accumulation during interphase. May play a role in cytokinesis. In Homo sapiens (Human), this protein is Ecotropic viral integration site 5 protein homolog (EVI5).